A 223-amino-acid polypeptide reads, in one-letter code: Small ribosomal subunit protein uS3 (223 aa).

The region spanning 39 to 115 (IRKYIEKNLA…RVFINIVEIK (77 aa)) is the KH type-2 domain.

The protein belongs to the universal ribosomal protein uS3 family. As to quaternary structure, part of the 30S ribosomal subunit. Forms a tight complex with proteins S10 and S14.

Functionally, binds the lower part of the 30S subunit head. Binds mRNA in the 70S ribosome, positioning it for translation. This is Small ribosomal subunit protein uS3 from Leuconostoc mesenteroides subsp. mesenteroides (strain ATCC 8293 / DSM 20343 / BCRC 11652 / CCM 1803 / JCM 6124 / NCDO 523 / NBRC 100496 / NCIMB 8023 / NCTC 12954 / NRRL B-1118 / 37Y).